The sequence spans 128 residues: Fluoride-specific ion channel FluC (128 aa).

The next 4 helical transmembrane spans lie at 5–25 (IVAIFVGAGLGALLRWFLSIG), 35–55 (LGTLASNLIGGYLIGIAVVAF), 67–87 (LFVITGFMGGLTTFSTYSVEV), and 96–116 (FGWALAVAALHLIGSFTLTGL). Na(+) is bound by residues Gly75 and Thr78.

Belongs to the fluoride channel Fluc/FEX (TC 1.A.43) family.

It is found in the cell inner membrane. It carries out the reaction fluoride(in) = fluoride(out). With respect to regulation, na(+) is not transported, but it plays an essential structural role and its presence is essential for fluoride channel function. Fluoride-specific ion channel. Important for reducing fluoride concentration in the cell, thus reducing its toxicity. The protein is Fluoride-specific ion channel FluC of Burkholderia pseudomallei (strain 1106a).